The sequence spans 141 residues: Ly6/PLAUR domain-containing protein 1 (141 aa).

The signal sequence occupies residues M1–A20. 6 cysteine pairs are disulfide-bonded: C25–C54, C28–C37, C46–C71, C77–C100, C88–C97, and C101–C106. The UPAR/Ly6 domain maps to C25–N107. N45 carries N-linked (GlcNAc...) asparagine glycosylation. G115 carries GPI-anchor amidated glycine lipidation. Residues S116–C141 constitute a propeptide, removed in mature form.

As to quaternary structure, interacts with CHRNA4 and nAChRs containing alpha-4:beta-2 (CHRNA4:CHRNB2) and alpha-7 (CHRNA7) subunits. Preferentially expressed in the nervous system. Expressed in embryonic and postnatal postmitotic central and peripheral neurons including subpopulations of motor neurons, sensory neurons, interneurons and neurons of the autonomous nervous system. Expressed around the growing nerves in the limb bud. Expressed at high levels in specific brain regions such as the prefrontal cortex, amygdala, hippocampus, mediodorsal thalamus, dentate gyrus and specific brainstem nuclei (at protein level).

The protein resides in the cell membrane. Believed to act as a modulator of nicotinic acetylcholine receptors (nAChRs) activity. In vitro increases receptor desensitization and decreases affinity for ACh of alpha-4:beta-2-containing nAChRs. May play a role in the intracellular trafficking of alpha-4:beta-2 and alpha-7-containing nAChRs and may inhibit their expression at the cell surface. May be involved in the control of anxiety. This chain is Ly6/PLAUR domain-containing protein 1 (Lypd1), found in Mus musculus (Mouse).